The following is a 332-amino-acid chain: MKVTFEQLKAAFNRVLISRGVDSETADACAEMFARTTESGVYSHGVNRFPRFIQQLENGDIIPDAQPKRITSLGAIEQWDAQRSIGNLTAKKMMDRAIELAADHGIGLVALRNANHWMRGGSYGWQAAEKGYIGICWTNSIAVMPPWGAKECRIGTNPLIVAIPSTPITMVDMSMSMFSYGMLEVNRLAGRQLPVDGGFDDEGNLTKEPGVIEKNRRILPMGYWKGSGMSIVLDMIATLLSDGASVAEVTQDNSDEYGISQIFIAIEVDKLIDGPTRDAKLQRIMDYVTTAERADENQAIRLPGHEFTTLLAENRRNGITVDDSVWAKIQAL.

His44 functions as the Proton donor in the catalytic mechanism. Residues 168–174, 224–225, and 304–306 contribute to the NAD(+) site; these read ITMVDMS, WK, and GHE.

This sequence belongs to the LDH2/MDH2 oxidoreductase family. DlgD subfamily. As to quaternary structure, homodimer.

Its subcellular location is the cytoplasm. It catalyses the reaction 3-dehydro-L-gulonate + NAD(+) = 2,3-dioxo-L-gulonate + NADH + H(+). The enzyme catalyses 3-dehydro-L-gulonate + NADP(+) = 2,3-dioxo-L-gulonate + NADPH + H(+). Its function is as follows. Catalyzes the reduction of 2,3-diketo-L-gulonate in the presence of NADH, to form 3-keto-L-gulonate. The sequence is that of 2,3-diketo-L-gulonate reductase from Escherichia coli O8 (strain IAI1).